Here is a 467-residue protein sequence, read N- to C-terminus: Uronate isomerase (467 aa).

It belongs to the metallo-dependent hydrolases superfamily. Uronate isomerase family.

It carries out the reaction D-glucuronate = D-fructuronate. The enzyme catalyses aldehydo-D-galacturonate = keto-D-tagaturonate. The protein operates within carbohydrate metabolism; pentose and glucuronate interconversion. This Solibacter usitatus (strain Ellin6076) protein is Uronate isomerase.